A 175-amino-acid chain; its full sequence is Peptide deformylase (175 aa).

2 residues coordinate Fe cation: Cys-98 and His-140. Glu-141 is an active-site residue. Fe cation is bound at residue His-144.

Belongs to the polypeptide deformylase family. Fe(2+) serves as cofactor.

It catalyses the reaction N-terminal N-formyl-L-methionyl-[peptide] + H2O = N-terminal L-methionyl-[peptide] + formate. In terms of biological role, removes the formyl group from the N-terminal Met of newly synthesized proteins. Requires at least a dipeptide for an efficient rate of reaction. N-terminal L-methionine is a prerequisite for activity but the enzyme has broad specificity at other positions. The protein is Peptide deformylase of Nitrobacter hamburgensis (strain DSM 10229 / NCIMB 13809 / X14).